Reading from the N-terminus, the 176-residue chain is Isopentenyl-diphosphate Delta-isomerase (176 aa).

H22 and H28 together coordinate Mn(2+). The Nudix hydrolase domain occupies 26–160 (LRHKAVSVFV…PDRYTPWLRI (135 aa)). C62 is an active-site residue. Residue H64 coordinates Mn(2+). Residue E82 coordinates Mg(2+). Residues E108 and E110 each contribute to the Mn(2+) site. E110 is a catalytic residue.

It belongs to the IPP isomerase type 1 family. The cofactor is Mg(2+). Requires Mn(2+) as cofactor.

The protein localises to the cytoplasm. It carries out the reaction isopentenyl diphosphate = dimethylallyl diphosphate. It functions in the pathway isoprenoid biosynthesis; dimethylallyl diphosphate biosynthesis; dimethylallyl diphosphate from isopentenyl diphosphate: step 1/1. It participates in porphyrin-containing compound metabolism; chlorophyll biosynthesis. Functionally, catalyzes the 1,3-allylic rearrangement of the homoallylic substrate isopentenyl (IPP) to its highly electrophilic allylic isomer, dimethylallyl diphosphate (DMAPP). This Roseobacter denitrificans (strain ATCC 33942 / OCh 114) (Erythrobacter sp. (strain OCh 114)) protein is Isopentenyl-diphosphate Delta-isomerase.